Consider the following 355-residue polypeptide: Phosphate acyltransferase (355 aa).

Belongs to the PlsX family. In terms of assembly, homodimer. Probably interacts with PlsY.

The protein localises to the cytoplasm. The catalysed reaction is a fatty acyl-[ACP] + phosphate = an acyl phosphate + holo-[ACP]. Its pathway is lipid metabolism; phospholipid metabolism. Functionally, catalyzes the reversible formation of acyl-phosphate (acyl-PO(4)) from acyl-[acyl-carrier-protein] (acyl-ACP). This enzyme utilizes acyl-ACP as fatty acyl donor, but not acyl-CoA. The polypeptide is Phosphate acyltransferase (Azorhizobium caulinodans (strain ATCC 43989 / DSM 5975 / JCM 20966 / LMG 6465 / NBRC 14845 / NCIMB 13405 / ORS 571)).